The sequence spans 208 residues: Small ribosomal subunit protein uS4 (208 aa).

The disordered stretch occupies residues tyrosine 28 to serine 48. The S4 RNA-binding domain occupies methionine 95–alanine 159.

The protein belongs to the universal ribosomal protein uS4 family. Part of the 30S ribosomal subunit. Contacts protein S5. The interaction surface between S4 and S5 is involved in control of translational fidelity.

In terms of biological role, one of the primary rRNA binding proteins, it binds directly to 16S rRNA where it nucleates assembly of the body of the 30S subunit. Its function is as follows. With S5 and S12 plays an important role in translational accuracy. The sequence is that of Small ribosomal subunit protein uS4 from Beutenbergia cavernae (strain ATCC BAA-8 / DSM 12333 / CCUG 43141 / JCM 11478 / NBRC 16432 / NCIMB 13614 / HKI 0122).